The sequence spans 116 residues: Aspartate 1-decarboxylase (116 aa).

Residue Ser-25 is the Schiff-base intermediate with substrate; via pyruvic acid of the active site. Residue Ser-25 is modified to Pyruvic acid (Ser). Thr-57 lines the substrate pocket. Residue Tyr-58 is the Proton donor of the active site. Gly-73–Ala-75 lines the substrate pocket.

It belongs to the PanD family. Heterooctamer of four alpha and four beta subunits. Pyruvate serves as cofactor. Post-translationally, is synthesized initially as an inactive proenzyme, which is activated by self-cleavage at a specific serine bond to produce a beta-subunit with a hydroxyl group at its C-terminus and an alpha-subunit with a pyruvoyl group at its N-terminus.

The protein localises to the cytoplasm. It carries out the reaction L-aspartate + H(+) = beta-alanine + CO2. It functions in the pathway cofactor biosynthesis; (R)-pantothenate biosynthesis; beta-alanine from L-aspartate: step 1/1. Catalyzes the pyruvoyl-dependent decarboxylation of aspartate to produce beta-alanine. The polypeptide is Aspartate 1-decarboxylase (Flavobacterium psychrophilum (strain ATCC 49511 / DSM 21280 / CIP 103535 / JIP02/86)).